The primary structure comprises 864 residues: Receptor like protein 24 (864 aa).

A signal peptide spans methionine 1–leucine 29. At leucine 30–lysine 830 the chain is on the extracellular side. N-linked (GlcNAc...) asparagine glycosylation is found at asparagine 61, asparagine 73, asparagine 94, and asparagine 112. 15 LRR repeats span residues phenylalanine 100–leucine 125, lysine 127–glycine 148, leucine 156–leucine 182, histidine 183–asparagine 205, asparagine 207–asparagine 229, leucine 230–leucine 253, threonine 254–phenylalanine 277, serine 279–serine 303, leucine 305–leucine 326, isoleucine 327–proline 350, leucine 351–proline 376, serine 378–histidine 398, leucine 399–leucine 423, glutamine 425–asparagine 448, and leucine 449–isoleucine 472. N-linked (GlcNAc...) asparagine glycosylation is found at asparagine 176, asparagine 194, asparagine 229, and asparagine 252. Asparagine 298 carries N-linked (GlcNAc...) asparagine glycosylation. Asparagine 338 carries an N-linked (GlcNAc...) asparagine glycan. N-linked (GlcNAc...) asparagine glycosylation is found at asparagine 433 and asparagine 448. Residues isoleucine 473 to asparagine 492 form an LRR 16; degenerate repeat. N-linked (GlcNAc...) asparagine glycosylation is found at asparagine 492 and asparagine 505. 10 LRR repeats span residues arginine 493–leucine 514, serine 515–aspartate 538, serine 539–cysteine 562, serine 564–alanine 585, leucine 586–proline 610, phenylalanine 613–asparagine 637, leucine 688–leucine 712, lysine 713–asparagine 735, leucine 736–leucine 760, and phenylalanine 762–glycine 785. Residue asparagine 561 is glycosylated (N-linked (GlcNAc...) asparagine). Asparagine 719 carries an N-linked (GlcNAc...) asparagine glycan. A helical membrane pass occupies residues alanine 831–alanine 851. Over serine 852–phenylalanine 864 the chain is Cytoplasmic.

Belongs to the RLP family.

It localises to the cell membrane. The protein is Receptor like protein 24 of Arabidopsis thaliana (Mouse-ear cress).